The following is a 2221-amino-acid chain: RNA-directed RNA polymerase L (2221 aa).

Residues 29 to 292 (KTVLLSQVNF…SERETLIEAE (264 aa)) form an endonuclease region. 3 residues coordinate Mn(2+): Glu-54, Asp-91, and Glu-104. Lys-117 is an active-site residue. The RdRp catalytic domain occupies 1171-1369 (LDMKSVVRLS…YLSSKLNKFI (199 aa)). Asp-1327 contacts Mg(2+).

This sequence belongs to the Bunyavirales RNA polymerase family. Homomultimer; the oligomeric structure is essential for the polymerase activity. Interacts with nucleoprotein N. Interacts with protein Z; this interaction inhibits viral transcription and replication, Z partially blocks the product exit tunnel for the releasing nascent RNA product. The cofactor is Mn(2+). Mg(2+) is required as a cofactor.

It localises to the virion. The protein localises to the host cytoplasm. It carries out the reaction RNA(n) + a ribonucleoside 5'-triphosphate = RNA(n+1) + diphosphate. In terms of biological role, RNA-dependent RNA polymerase, which is responsible for the replication and transcription of the viral RNA genome using antigenomic RNA as an intermediate. During transcription, synthesizes subgenomic RNAs and assures their capping by a cap-snatching mechanism, which involves the endonuclease activity cleaving the host capped pre-mRNAs. These short capped RNAs are then used as primers for viral transcription. The 3'-end of subgenomic mRNAs molecules are heterogeneous and not polyadenylated. The replicase function is to direct synthesis of antigenomic and genomic RNA which are encapsidated and non capped. As a consequence of the use of the same enzyme for both transcription and replication, these mechanisms need to be well coordinated. These processes may be regulated by proteins N and Z in a dose-dependent manner. Z protein inhibits the viral polymerase L und thus the viral transcription and RNA synthesis. The chain is RNA-directed RNA polymerase L from Sigmodon hispidus (Hispid cotton rat).